A 310-amino-acid chain; its full sequence is tRNA dimethylallyltransferase (310 aa).

An ATP-binding site is contributed by 11–18 (GPTAVGKT). 13–18 (TAVGKT) is a binding site for substrate. The segment at 36–39 (DSMQ) is interaction with substrate tRNA.

Belongs to the IPP transferase family. Monomer. Mg(2+) serves as cofactor.

The catalysed reaction is adenosine(37) in tRNA + dimethylallyl diphosphate = N(6)-dimethylallyladenosine(37) in tRNA + diphosphate. Its function is as follows. Catalyzes the transfer of a dimethylallyl group onto the adenine at position 37 in tRNAs that read codons beginning with uridine, leading to the formation of N6-(dimethylallyl)adenosine (i(6)A). This is tRNA dimethylallyltransferase from Shouchella clausii (strain KSM-K16) (Alkalihalobacillus clausii).